A 208-amino-acid polypeptide reads, in one-letter code: ATP-dependent Clp protease proteolytic subunit (208 aa).

The Nucleophile role is filled by serine 111. Histidine 136 is a catalytic residue.

The protein belongs to the peptidase S14 family. As to quaternary structure, fourteen ClpP subunits assemble into 2 heptameric rings which stack back to back to give a disk-like structure with a central cavity, resembling the structure of eukaryotic proteasomes.

Its subcellular location is the cytoplasm. The catalysed reaction is Hydrolysis of proteins to small peptides in the presence of ATP and magnesium. alpha-casein is the usual test substrate. In the absence of ATP, only oligopeptides shorter than five residues are hydrolyzed (such as succinyl-Leu-Tyr-|-NHMec, and Leu-Tyr-Leu-|-Tyr-Trp, in which cleavage of the -Tyr-|-Leu- and -Tyr-|-Trp bonds also occurs).. Functionally, cleaves peptides in various proteins in a process that requires ATP hydrolysis. Has a chymotrypsin-like activity. Plays a major role in the degradation of misfolded proteins. The polypeptide is ATP-dependent Clp protease proteolytic subunit (Vibrio campbellii (strain ATCC BAA-1116)).